Here is a 585-residue protein sequence, read N- to C-terminus: Complement component C8 alpha chain (585 aa).

The first 20 residues, 1–20 (MLVAAFFTLFLVTCQPAVTA), serve as a signal peptide directing secretion. A propeptide spanning residues 21 to 30 (QEKVNQRVNR) is cleaved from the precursor. Residues 38–91 (DCQLSSWSEWTDCFPCQDTKYRHRSLLQPNKFGGTICSGDIWDRASCYSPTACL) form the TSP type-1 1 domain. Intrachain disulfides connect cysteine 39-cysteine 74, cysteine 50-cysteine 84, cysteine 53-cysteine 90, cysteine 96-cysteine 108, cysteine 102-cysteine 121, cysteine 115-cysteine 130, and cysteine 140-cysteine 177. The C-linked (Man) tryptophan glycan is linked to tryptophan 44. The LDL-receptor class A domain maps to 94–132 (AQCGQDFQCKETGRCLKRHLVCNGENDCLDGSDEDNCED). Residues leucine 113, asparagine 116, glutamate 118, aspartate 120, aspartate 126, and glutamate 127 each coordinate Ca(2+). The MACPF domain occupies 136 to 499 (TESDCAQYDP…QYLMEFNACR (364 aa)). The next 4 membrane-spanning stretches (beta stranded) occupy residues 248-256 (AGVTISAGL), 259-266 (SPLLGTVG), 377-384 (GGFGEIQY), and 391-396 (AQGILS). Cysteines 375 and 400 form a disulfide. A glycan (N-linked (GlcNAc...) asparagine) is linked at asparagine 438. Cystine bridges form between cysteine 498–cysteine 545, cysteine 500–cysteine 516, cysteine 503–cysteine 518, and cysteine 520–cysteine 529. Residues 499–530 (RCGPCFNNGKPILEGTSCRCQCSLGLQGPACE) form the EGF-like domain. The region spanning 540–584 (DGHWSCWGSWSPCTAGTRERRRECNNPAPQNGGAPCPGWRVQTQA) is the TSP type-1 2 domain. C-linked (Man) tryptophan glycosylation is found at tryptophan 543, tryptophan 546, and tryptophan 549. 2 disulfides stabilise this stretch: cysteine 552/cysteine 585 and cysteine 563/cysteine 575.

It belongs to the complement C6/C7/C8/C9 family. Heterotrimer of 3 chains: alpha (C8A), beta (C8B) and gamma (C8G); the alpha and gamma chains are disulfide bonded. Component of the membrane attack complex (MAC), composed of complement C5b, C6, C7, C8A, C8B, C8G and multiple copies of the pore-forming subunit C9.

The protein localises to the secreted. Its subcellular location is the target cell membrane. Its activity is regulated as follows. Membrane attack complex (MAC) assembly is inhibited by CD59, thereby protecting self-cells from damage during complement activation. CD59 acts by binding to the beta-haipins of C8 (C8A and C8B), forming an intermolecular beta-sheet that prevents incorporation of the multiple copies of C9 required for complete formation of the osmolytic pore. MAC assembly is also inhibited by clusterin (CLU) chaperones that inhibit polymerization of C9. In terms of biological role, component of the membrane attack complex (MAC), a multiprotein complex activated by the complement cascade, which inserts into a target cell membrane and forms a pore, leading to target cell membrane rupture and cell lysis. The MAC is initiated by proteolytic cleavage of C5 into complement C5b in response to the classical, alternative, lectin and GZMK complement pathways. The complement pathways consist in a cascade of proteins that leads to phagocytosis and breakdown of pathogens and signaling that strengthens the adaptive immune system. C8A, together with C8B and C8G, inserts into the target membrane, but does not form pores by itself. During MAC assembly, associates with C5b, C6 and C7 to form the C5b8 intermediate complex that inserts into the target membrane and traverses the bilayer increasing membrane rigidity. This chain is Complement component C8 alpha chain (C8A), found in Oryctolagus cuniculus (Rabbit).